Reading from the N-terminus, the 353-residue chain is Putative glycosyltransferase TagX (353 aa).

Belongs to the glycosyltransferase 2 family.

In Staphylococcus aureus (strain MSSA476), this protein is Putative glycosyltransferase TagX (tagX).